Here is a 410-residue protein sequence, read N- to C-terminus: MVLKAEHTRSPSATLPSNVPSCRSLSSSEDGPSGPSSLADGGLAHNLQDSVRHRILYLSEQLRVEKASRDGNTVSYLKLVSKADRHQVPHIQQAFEKVNQRASATIAQIEHRLHQCHQQLQELEEGCRPEGLLLMAESDPANCEPPSEKALLSEPPEPGGEDGPVNLPHASRPFILESRFQSLQQGTCLETEDVAQQQNLLLQKVKAELEEAKRFHISLQESYHSLKERSLTDLQLLLESLQEEKCRQALMEEQVNGRLQGQLNEIYNLKHNLACSEERMAYLSYERAKEIWEITETFKSRISKLEMLQQVTQLEAAEHLQSRPPQMLFKFLSPRLSLATVLLVFVSTLCACPSSLISSRLCTCTMLMLIGLGVLAWQRWRAIPATDWQEWVPSRCRLYSKDSGPPADGP.

Residues 1–43 are disordered; that stretch reads MVLKAEHTRSPSATLPSNVPSCRSLSSSEDGPSGPSSLADGGL. The span at 10–23 shows a compositional bias: polar residues; the sequence is SPSATLPSNVPSCR. Residues 24–38 are compositionally biased toward low complexity; it reads SLSSSEDGPSGPSSL. The stretch at 93-128 forms a coiled coil; that stretch reads QAFEKVNQRASATIAQIEHRLHQCHQQLQELEEGCR. The tract at residues 137–164 is disordered; the sequence is ESDPANCEPPSEKALLSEPPEPGGEDGP. The stretch at 185-245 forms a coiled coil; it reads QGTCLETEDV…LLLESLQEEK (61 aa). The helical transmembrane segment at 336–358 threads the bilayer; sequence LSLATVLLVFVSTLCACPSSLIS.

This sequence belongs to the TEX28 family. In terms of tissue distribution, testis specific.

The protein resides in the membrane. In Homo sapiens (Human), this protein is Testis-specific protein TEX28 (TEX28).